The sequence spans 256 residues: tRNA pseudouridine synthase A (256 aa).

Aspartate 43 serves as the catalytic Nucleophile. Tyrosine 94 is a substrate binding site.

The protein belongs to the tRNA pseudouridine synthase TruA family.

The enzyme catalyses uridine(38/39/40) in tRNA = pseudouridine(38/39/40) in tRNA. In terms of biological role, formation of pseudouridine at positions 38, 39 and 40 in the anticodon stem and loop of transfer RNAs. The polypeptide is tRNA pseudouridine synthase A (Pyrobaculum aerophilum (strain ATCC 51768 / DSM 7523 / JCM 9630 / CIP 104966 / NBRC 100827 / IM2)).